A 664-amino-acid chain; its full sequence is MEGRDDGGGKVIGLIEKATKSTAQEVDPRLLKAIKSIVRYSDSEVRLSSQTLMELMRHNHSQVRYLTLFIIDELFMRSKLFRTLIIENLDQLLSLSIGFRSNLPLPAPPAVATTLRSKAIEFLEKWNLSFGFHYKELRLGFDYLKNTLKLKFPDLQANAARIQRERQEREMKTKEILRNKFDSLRVSFGLFKYEIEVTIKEIKECMEIVQWRGDDGVPLAILDEEDFEEIRCSHLRQIRLDSLKQSEKVEETGENRIVFDVLREQCKLLVTKHLISVQEGISLLIRVDVSDNRTRDSMLKDLIDIRNNILAAKKKWEEAGFTMSRMTDIHGNEETNEEEEDIWEEDDGKVKTDSVKNVAHVMRTQQSENSSLPSSGEAKKSTSEARSNKVSNTKKVGSSGNSLRDKLISEAPVMNWGSQLTNWESTTEVRANYRGLEIESHWGRVDQDAIIPADKIAELNLQATVYREERTETPPCRASLKKGGLCQRRDLRVCPFHGPIVPRDDEGNTIIQESPLDESENQTSSTSGTNQDVSMDETTSDSDPNQLARQIAKEALKNIREKDKEVVRKRAKLVKVKVKEHNHEVLRGAAIASTSRSNAMDDEFDRVFAEKKNKKQTFSTRRKKTTAKDRISQRLFSNRVKGTNPQQLAQGNDEKCRDTSANQW.

A VHS-like region spans residues 10-153; that stretch reads KVIGLIEKAT…LKNTLKLKFP (144 aa). The stretch at 148 to 180 forms a coiled coil; the sequence is LKLKFPDLQANAARIQRERQEREMKTKEILRNK. Disordered regions lie at residues 330–350 and 362–403; these read HGNE…DGKV and MRTQ…GNSL. Residues 334–347 show a composition bias toward acidic residues; the sequence is ETNEEEEDIWEEDD. Residues 363 to 374 are compositionally biased toward polar residues; it reads RTQQSENSSLPS. The segment covering 377–387 has biased composition (basic and acidic residues); sequence EAKKSTSEARS. Residues 388-402 are compositionally biased toward polar residues; that stretch reads NKVSNTKKVGSSGNS. The segment at 473–500 adopts a UVSSA-type zinc-finger fold; the sequence is TPPCRASLKKGGLCQRRDLRVCPFHGPI. Cys476, Cys486, Cys494, and His497 together coordinate Zn(2+). 2 disordered regions span residues 514 to 546 and 640 to 664; these read SPLD…DPNQ and VKGT…ANQW. Composition is skewed to polar residues over residues 521 to 533 and 640 to 650; these read NQTS…NQDV and VKGTNPQQLAQ.

Belongs to the UVSSA family.

Its subcellular location is the chromosome. The sequence is that of UV-stimulated scaffold protein A homolog from Arabidopsis thaliana (Mouse-ear cress).